Here is a 296-residue protein sequence, read N- to C-terminus: Vacuolar histidine transporter YPQ3 (296 aa).

The Vacuolar segment spans residues M1–N12. Residues A10–L76 enclose the PQ-loop 1 domain. A helical transmembrane segment spans residues L13–I33. Over Y34–G44 the chain is Cytoplasmic. A helical transmembrane segment spans residues L45 to M65. Topologically, residues M66–N68 are vacuolar. The helical transmembrane segment at L69–I89 threads the bilayer. Topologically, residues Q90 to N163 are cytoplasmic. A helical transmembrane segment spans residues F164 to I184. The Vacuolar segment spans residues S185–P199. The chain crosses the membrane as a helical span at residues A200–L220. Positions A208 to T270 constitute a PQ-loop 2 domain. At G221–G238 the chain is on the cytoplasmic side. Residues V239 to L259 traverse the membrane as a helical segment. Topologically, residues S260–S262 are vacuolar. Residues W263 to L283 form a helical membrane-spanning segment. Residues Y284–N296 lie on the Cytoplasmic side of the membrane.

It belongs to the laat-1 family.

It is found in the vacuole membrane. Its subcellular location is the mitochondrion membrane. Functionally, amino acid transporter that moves histidine into the vacuole. May also contribute to low affinity arginine import into the vacuole. May function as an amino acid/proton antiporter. The polypeptide is Vacuolar histidine transporter YPQ3 (Saccharomyces cerevisiae (strain ATCC 204508 / S288c) (Baker's yeast)).